A 209-amino-acid polypeptide reads, in one-letter code: MEPFAAYPLKCSGPKAKIFAVLLSMVLCTVMLFLLQLKFLKPRTNSFYSFEVKDAKGRTVSLEKFKGKASLVVNVASDCRFTDKSYQTLRELHKEFGPYHFNVLAFPCNQFGESEPKSSKEVESFARQNYGVTFPIFHKIKILGPEAEPAFRFIVDSSKKEPRWNFWKYLVNPEGQVVKFWRPEEPLEAIRPHVSQMIGQIILKKKEDL.

Position 1 is an N-acetylmethionine (Met1). The helical transmembrane segment at 18 to 40 threads the bilayer; it reads IFAVLLSMVLCTVMLFLLQLKFL. The active site involves Cys79.

This sequence belongs to the glutathione peroxidase family.

The protein localises to the membrane. The catalysed reaction is 2 glutathione + H2O2 = glutathione disulfide + 2 H2O. The protein is Probable glutathione peroxidase 8 (Gpx8) of Mus musculus (Mouse).